The sequence spans 461 residues: Spermidine coumaroyl-CoA acyltransferase (461 aa).

Catalysis depends on proton acceptor residues His-168 and Asp-393.

Belongs to the plant acyltransferase family. As to quaternary structure, monomer. In terms of tissue distribution, mainly expressed in roots at low levels, specifically, in the root tip.

The enzyme catalyses 2 (E)-4-coumaroyl-CoA + spermidine = N(1),N(8)-bis(coumaroyl)-spermidine + 2 CoA + 2 H(+). Its pathway is amine and polyamine metabolism; spermidine metabolism. Functionally, spermidine coumaroyl-CoA acyltransferase that mediates the conversion of spermidine into dicoumaroyl-spermidine. This Arabidopsis thaliana (Mouse-ear cress) protein is Spermidine coumaroyl-CoA acyltransferase.